We begin with the raw amino-acid sequence, 204 residues long: FMN-dependent NADH:quinone oxidoreductase (204 aa).

Residue S9 participates in FMN binding.

It belongs to the azoreductase type 1 family. In terms of assembly, homodimer. It depends on FMN as a cofactor.

It carries out the reaction 2 a quinone + NADH + H(+) = 2 a 1,4-benzosemiquinone + NAD(+). The catalysed reaction is N,N-dimethyl-1,4-phenylenediamine + anthranilate + 2 NAD(+) = 2-(4-dimethylaminophenyl)diazenylbenzoate + 2 NADH + 2 H(+). Functionally, quinone reductase that provides resistance to thiol-specific stress caused by electrophilic quinones. Its function is as follows. Also exhibits azoreductase activity. Catalyzes the reductive cleavage of the azo bond in aromatic azo compounds to the corresponding amines. This chain is FMN-dependent NADH:quinone oxidoreductase, found in Thiobacillus denitrificans (strain ATCC 25259 / T1).